A 289-amino-acid chain; its full sequence is Transmembrane protein 163 (289 aa).

A disordered region spans residues 1-65 (MEPAAGIQRR…ESGQFSDGLE (65 aa)). Over 1-88 (MEPAAGIQRR…HEAQNYRKKA (88 aa)) the chain is Cytoplasmic. Ser11 is subject to Phosphoserine. Residues 16-36 (TVPPPPRGHAPPAAAPGPAPL) show a composition bias toward pro residues. The tract at residues 42-72 (EPPQLEEERQVRISESGQFSDGLEDRGLLES) is required for interaction with MCOLN1. Phosphoserine is present on residues Ser55, Ser57, and Ser61. The helical transmembrane segment at 89 to 109 (LWVSWFSIIVTLALAVAAFTV) threads the bilayer. Over 110–116 (SVMRYSA) the chain is Extracellular. The helical transmembrane segment at 117–137 (SAFGFAFDAILDVLSSAIVLW) threads the bilayer. Residues 138–150 (RYSNAAAVHSAHR) are Cytoplasmic-facing. The helical transmembrane segment at 151 to 171 (EYIACVILGVIFLLSSICIVV) threads the bilayer. Topologically, residues 172–187 (KAIHDLSTRLLPEVDD) are extracellular. A helical membrane pass occupies residues 188–208 (FLFSVSILSGILCSILAVLKF). At 209–217 (MLGKVLTSR) the chain is on the cytoplasmic side. The chain crosses the membrane as a helical span at residues 218–238 (ALITDGFNSLVGGVMGFSILL). Topologically, residues 239–255 (SAEVFKHDSAVWYLDGS) are extracellular. A helical membrane pass occupies residues 256–276 (IGVLIGLTIFAYGVKLLIDMV). Over 277–289 (PRVRQTRHYEMFE) the chain is Cytoplasmic.

Belongs to the TMEM163 family. Homodimer. Interacts with MCOLN1/TRPML1. Interacts with SLC30A1, SLC30A2, SLC30A3 and SLC30A4. Widely expressed. High expression is detected in brain, lung and testis.

The protein localises to the cytoplasmic vesicle. It is found in the secretory vesicle. The protein resides in the synaptic vesicle membrane. It localises to the early endosome membrane. Its subcellular location is the late endosome membrane. The protein localises to the lysosome membrane. It is found in the cell membrane. It carries out the reaction Zn(2+)(in) = Zn(2+)(out). Its function is as follows. Zinc ion transporter that mediates zinc efflux and plays a crucial role in intracellular zinc homeostasis. Binds the divalent cations Zn(2+), Ni(2+), and to a minor extent Cu(2+). Is a functional modulator of P2X purinoceptors, including P2RX1, P2RX3, P2RX4 and P2RX7. Plays a role in central nervous system development and is required for myelination, and survival and proliferation of oligodendrocytes. This chain is Transmembrane protein 163 (TMEM163), found in Homo sapiens (Human).